Consider the following 235-residue polypeptide: MSTLETTRAELGLVVVYLNKAEARDKICRAIQYGSKFLSDGQPGTAQNVDKNTSLARKVFRLFKFVNDLHALISPVPKGTPLPLVLLGKSKNALLSTFLFLDQIVWLGRTGIYKDKERAEILGRISLFCWMGSSVCTSLVEVGELGRLSASIKKLEKEIGNKDKHQNEQYRAKVEKSNERSLALIKAGMDVVVAFGLLQLAPKKVTPRVTGAFGFASSLISCYQLLPSHPKSKMV.

Residues 1–91 (MSTLETTRAE…LPLVLLGKSK (91 aa)) lie on the Cytoplasmic side of the membrane. Residues 92–108 (NALLSTFLFLDQIVWLG) traverse the membrane as a helical segment. Residues 109 to 206 (RTGIYKDKER…LLQLAPKKVT (98 aa)) are Lumenal-facing. The chain crosses the membrane as a helical span at residues 207–226 (PRVTGAFGFASSLISCYQLL). Residues 227–235 (PSHPKSKMV) are Cytoplasmic-facing.

This sequence belongs to the peroxin-11 family. Homooligomer. Interacts with ARC5 and FIS1B on peroxisomes. Expressed in roots and developing siliques.

Its subcellular location is the peroxisome membrane. In terms of biological role, involved in peroxisomal proliferation. Promotes peroxisomal duplication, aggregation or elongation without fission. In Arabidopsis thaliana (Mouse-ear cress), this protein is Peroxisomal membrane protein 11C (PEX11C).